The sequence spans 557 residues: Dihydroxy-acid dehydratase (557 aa).

Cysteine 50 lines the [2Fe-2S] cluster pocket. A Mg(2+)-binding site is contributed by aspartate 82. Cysteine 123 contributes to the [2Fe-2S] cluster binding site. Mg(2+) is bound by residues aspartate 124 and lysine 125. Lysine 125 bears the N6-carboxylysine mark. Cysteine 195 provides a ligand contact to [2Fe-2S] cluster. Glutamate 447 lines the Mg(2+) pocket. The Proton acceptor role is filled by serine 473.

The protein belongs to the IlvD/Edd family. Homodimer. The cofactor is [2Fe-2S] cluster. Mg(2+) serves as cofactor.

It catalyses the reaction (2R)-2,3-dihydroxy-3-methylbutanoate = 3-methyl-2-oxobutanoate + H2O. The catalysed reaction is (2R,3R)-2,3-dihydroxy-3-methylpentanoate = (S)-3-methyl-2-oxopentanoate + H2O. Its pathway is amino-acid biosynthesis; L-isoleucine biosynthesis; L-isoleucine from 2-oxobutanoate: step 3/4. It participates in amino-acid biosynthesis; L-valine biosynthesis; L-valine from pyruvate: step 3/4. Functionally, functions in the biosynthesis of branched-chain amino acids. Catalyzes the dehydration of (2R,3R)-2,3-dihydroxy-3-methylpentanoate (2,3-dihydroxy-3-methylvalerate) into 2-oxo-3-methylpentanoate (2-oxo-3-methylvalerate) and of (2R)-2,3-dihydroxy-3-methylbutanoate (2,3-dihydroxyisovalerate) into 2-oxo-3-methylbutanoate (2-oxoisovalerate), the penultimate precursor to L-isoleucine and L-valine, respectively. This chain is Dihydroxy-acid dehydratase, found in Burkholderia thailandensis (strain ATCC 700388 / DSM 13276 / CCUG 48851 / CIP 106301 / E264).